The sequence spans 229 residues: GTP:AMP phosphotransferase (229 aa).

An a ribonucleoside 5'-triphosphate-binding site is contributed by 10–15 (GVGKGT). Residues 30 to 59 (NVGNILRNEIKKESNIGKEVQNVVRSGNLV) are NMP. Residues R36, 57–59 (NLV), G87, 87–90 (GFPR), and Q94 each bind AMP. Positions 123-170 (GRRICNICDKNFNVSNIQQDSFDMPPILPSKDCIQCNGHTNLIKRKDD) are LID. An AMP-binding site is contributed by R178.

Belongs to the adenylate kinase family.

The protein resides in the mitochondrion. The enzyme catalyses a ribonucleoside 5'-triphosphate + AMP = a ribonucleoside 5'-diphosphate + ADP. It carries out the reaction GTP + AMP = GDP + ADP. With respect to regulation, inhibited by the dinucleoside pentaphosphate compound P1,P5-di(guanosine-5') pentaphosphate (GP5A). Catalyzes the reversible transfer of the terminal phosphate group between GTP and AMP. Has very low activity with UTP, ITP, CTP and IMP and no activity with ATP, GMP, CMP and UMP in vitro. The polypeptide is GTP:AMP phosphotransferase (Plasmodium falciparum (isolate 3D7)).